Reading from the N-terminus, the 296-residue chain is ADP-forming sulfoacetate-CoA ligase subunit SqwL (296 aa).

CoA contacts are provided by residues 17–20 (TGSE), K43, and 96–98 (IAD). H251 acts as the Tele-phosphohistidine intermediate in catalysis.

The protein belongs to the succinate/malate CoA ligase alpha subunit family. Forms a complex with SqwK.

It carries out the reaction sulfoacetate + ATP + CoA = sulfoacetyl-CoA + ADP + phosphate. In terms of biological role, part of a variant of the sulfo-TK pathway, a D-sulfoquinovose degradation pathway that produces sulfoacetate. Hydrolyzes sulfoacetyl-coenzyme A (sulfoacetyl-CoA) to produce sulfoacetate and CoA coupled with the phosphorylation of ADP to generate ATP. Cannot use succinate, acetate or 3-hydroxypropionate, and shows only residual activities with malonate and 3-sulfopropanoate. The protein is ADP-forming sulfoacetate-CoA ligase subunit SqwL of Acholeplasma sp.